The sequence spans 159 residues: Transcription elongation factor GreA (159 aa).

The protein belongs to the GreA/GreB family.

Functionally, necessary for efficient RNA polymerase transcription elongation past template-encoded arresting sites. The arresting sites in DNA have the property of trapping a certain fraction of elongating RNA polymerases that pass through, resulting in locked ternary complexes. Cleavage of the nascent transcript by cleavage factors such as GreA or GreB allows the resumption of elongation from the new 3'terminus. GreA releases sequences of 2 to 3 nucleotides. The polypeptide is Transcription elongation factor GreA (Psychromonas ingrahamii (strain DSM 17664 / CCUG 51855 / 37)).